A 599-amino-acid chain; its full sequence is Proline dehydrogenase 1, mitochondrial (599 aa).

2 disordered regions span residues 20–39 (STKPQAQEQPPASPEALRGC) and 152–180 (EEAERKEMESCTSEAERDGSGANKREKQY). Positions 23-39 (PQAQEQPPASPEALRGC) are enriched in low complexity. Residues 153 to 180 (EAERKEMESCTSEAERDGSGANKREKQY) are compositionally biased toward basic and acidic residues. N6-acetyllysine is present on residues K356, K367, and K485.

It belongs to the proline oxidase family. FAD serves as cofactor. Expressed in liver, kidney, heart and to a lesser extent in brain, lung and muscle.

It localises to the mitochondrion matrix. It carries out the reaction L-proline + a quinone = (S)-1-pyrroline-5-carboxylate + a quinol + H(+). It functions in the pathway amino-acid degradation; L-proline degradation into L-glutamate; L-glutamate from L-proline: step 1/2. Converts proline to delta-1-pyrroline-5-carboxylate. This chain is Proline dehydrogenase 1, mitochondrial (Prodh), found in Mus musculus (Mouse).